The sequence spans 218 residues: Major NAD(P)H-flavin oxidoreductase (218 aa).

FMN-binding positions include 12–16 (RYTSK) and asparagine 73. 154-159 (LARLNI) lines the NAD(+) pocket. FMN is bound by residues 165-166 (EG) and 206-208 (KSR).

Belongs to the nitroreductase family. Homodimer. Requires FMN as cofactor.

In terms of biological role, involved in bioluminescence. It is a good supplier of reduced flavin mononucleotide (FMNH2) to the bioluminescence reaction. Major FMN reductase. It is capable of using both NADH and NADPH as electron donors. As electron acceptor, FMN is the most effective, FAD is considerably effective, and riboflavin is the least effective. The protein is Major NAD(P)H-flavin oxidoreductase of Aliivibrio fischeri (Vibrio fischeri).